A 230-amino-acid chain; its full sequence is Cytidylate kinase (230 aa).

12 to 20 is a binding site for ATP; that stretch reads GPSGAGKGT.

Belongs to the cytidylate kinase family. Type 1 subfamily.

It localises to the cytoplasm. It catalyses the reaction CMP + ATP = CDP + ADP. It carries out the reaction dCMP + ATP = dCDP + ADP. This Aeromonas salmonicida (strain A449) protein is Cytidylate kinase.